Consider the following 184-residue polypeptide: Serine recombinase PinE (184 aa).

The Resolvase/invertase-type recombinase catalytic domain occupies 1–134; sequence MLIGYVRVST…AGLETARAQG (134 aa). The active-site O-(5'-phospho-DNA)-serine intermediate is S9. Positions 161–180 form a DNA-binding region, H-T-H motif; the sequence is RQKVAIIYDVGVSTLYKRFP.

The protein belongs to the site-specific recombinase resolvase family.

In terms of biological role, this protein catalyzes the inversion of an 1800-bp E.coli DNA fragment, the P region, which can exist in either orientation. The function of the inversion is not yet clear. The chain is Serine recombinase PinE (pinE) from Escherichia coli (strain K12).